The following is a 466-amino-acid chain: MALEKLLRSIPKVDEILKAPELQDYLNRYQREIITRKVREVLDELRTGIVSGQRQKPLEFQEVVNLAQRKIESFFLPPYRRVVNGTGVVLHTNLGRAPLAPEAVEALRKVSGSYGNLELDLTTGKRGSRYDHVVEYLCELTGAEDALVVNNNASAVVLALSSMAFGKEVIVSRGQLVEIGGAFRIPEIMERSGAILKEVGTTNKTRIDDYRKAINENTGLLLGVHTSNYKIIGFTESVEIADLVKLGKEKGIPVMWDLGSGSLVDLTSYGLPYEPTVQEVLAAGVDVVTFSGDKLLGGPQAGIIAGKKEFVAKMKKHPLTRAIRIDKMTVAALQATLMLYFERDFLSKIPVLRMLTEPPEKIKKRAQKLYRKLLRAKLPAEISLDEGKSEVGGGAFPGTYLSSYVIKINPHHLSVEKLAKALREENPALLGRIEEEKFIIDLRTVLEEEIDYCKRLLEKHLVGDRQ.

Position 294 is an N6-(pyridoxal phosphate)lysine (Lys294).

This sequence belongs to the SelA family. It depends on pyridoxal 5'-phosphate as a cofactor.

The protein resides in the cytoplasm. It catalyses the reaction L-seryl-tRNA(Sec) + selenophosphate + H(+) = L-selenocysteinyl-tRNA(Sec) + phosphate. It functions in the pathway aminoacyl-tRNA biosynthesis; selenocysteinyl-tRNA(Sec) biosynthesis; selenocysteinyl-tRNA(Sec) from L-seryl-tRNA(Sec) (bacterial route): step 1/1. Functionally, converts seryl-tRNA(Sec) to selenocysteinyl-tRNA(Sec) required for selenoprotein biosynthesis. This is L-seryl-tRNA(Sec) selenium transferase from Carboxydothermus hydrogenoformans (strain ATCC BAA-161 / DSM 6008 / Z-2901).